The chain runs to 993 residues: MRSSAPMPRMSRRGRVTIGVLVGVFVLFTLLGWGVQAWTDWLWFGKVDYTEVFSGVLVTRLLLFVTVGLAMAVVVGGNLWLAHRLRPRLRPQSPEQATLERYRMLLSPRLGTWFAVVSVVVGLFAGLSAQSRWSQWLLFRNGGDFGVKDPEFGIDIGFYVFDLPFWRYLLGVAFTAVVLALIGALAVHYVFGGVRLQGVGDRMSNAARAHLSALVAVFVLLKAVAYVLDRRTMLLEYNDGANVYGAGYADINALLPAKEILAYISVVVAIAVLVFSNAWMRNLVWPGISLALLGVSAVAIGGIYPWAVQTFEVKPSARDKEARYIERSIEATRAAFNLGGVETRRYAASNLQPPASLATDTAVVPNARLLDPQLVSETYTQLQQVRGFYDFGPKLDIDRYAVEGKTQDYVVGVREINYGELTAQQSNWINRHTVYTHGYGLVAAPANRVVCGGQPYFVSGFLGDRSQEGCAAPTDQIPASQPRIYYGERMEAGDYAIVGKSNPDANPAEFDRPVGEGDDGAESYYTYTGSGGVEIGSFSRRLLYAIKEQESNFLLSEAVNENSKLLYVRNPRERVEKVAPFLTVDGDPYPAVIDGRVTWIIDGYTTAATYPYAERINLQTETTDELTNRGTFQQARENINYIRNSVKATVDAYDGTVTLYEFDDGDPVLRAWNKAFGGDLIKSKTEIPAELSAHFRYPADLFKVQRNVLTRFHVTSPGDFYSGQDFWQVPNVPDAPDSGQKQPPYYLFTQFPGQEEARFQLTAAVTPNRRQNLAALMSGSYVDGKPQLEVLELPEDTRISGPVQVHQQMTNNAQIRQQLNLLSSNQAQVQYGNLLSLPFGDGMLYVEPVYVKSNQQQAYPLLQKVLLSYGDGGSFVVLADNLADGIKQLVEQGEKAGAPSTPPPSGETPAPTPTPTPTPSSPSVTPPPVTGELADAAQRVQAAIVELRAAQESGDFERYGRALKALDEATAAFEQAAGPGSAATPTGSPSPGG.

7 helical membrane passes run 18-38, 61-81, 110-130, 171-191, 209-229, 260-280, and 283-303; these read IGVLVGVFVLFTLLGWGVQAW, LLLFVTVGLAMAVVVGGNLWL, LGTWFAVVSVVVGLFAGLSAQ, GVAFTAVVLALIGALAVHYVF, AHLSALVAVFVLLKAVAYVLD, ILAYISVVVAIAVLVFSNAWM, and LVWPGISLALLGVSAVAIGGI. 2 disordered regions span residues 892–937 and 974–993; these read QGEK…ADAA and EQAAGPGSAATPTGSPSPGG. Residues 900 to 929 are compositionally biased toward pro residues; that stretch reads STPPPSGETPAPTPTPTPTPSSPSVTPPPV. Low complexity predominate over residues 976–993; it reads AAGPGSAATPTGSPSPGG.

It belongs to the UPF0182 family.

The protein localises to the cell membrane. The sequence is that of UPF0182 protein Sare_4110 from Salinispora arenicola (strain CNS-205).